The chain runs to 231 residues: Putative N-acetylmannosamine-6-phosphate 2-epimerase (231 aa).

Belongs to the NanE family.

The catalysed reaction is an N-acyl-D-glucosamine 6-phosphate = an N-acyl-D-mannosamine 6-phosphate. The protein operates within amino-sugar metabolism; N-acetylneuraminate degradation; D-fructose 6-phosphate from N-acetylneuraminate: step 3/5. Functionally, converts N-acetylmannosamine-6-phosphate (ManNAc-6-P) to N-acetylglucosamine-6-phosphate (GlcNAc-6-P). The polypeptide is Putative N-acetylmannosamine-6-phosphate 2-epimerase (Glaesserella parasuis serovar 5 (strain SH0165) (Haemophilus parasuis)).